Here is a 199-residue protein sequence, read N- to C-terminus: Transcriptional regulatory protein DesR (199 aa).

One can recognise a Response regulatory domain in the interval 3 to 117 (SIFIAEDQQM…ELANAIRSVM (115 aa)). Position 54 is a 4-aspartylphosphate (Asp54). In terms of domain architecture, HTH luxR-type spans 131-196 (LYSEANPLTD…EAITRSKEKG (66 aa)). Residues 155 to 174 (TKEIAQELSIKSGTVRNYIS) constitute a DNA-binding region (H-T-H motif).

In terms of processing, phosphorylated by DesK.

It is found in the cytoplasm. Its function is as follows. Member of the two-component regulatory system DesR/DesK, responsible for cold induction of the des gene coding for the Delta5 acyl-lipid desaturase. The sequence is that of Transcriptional regulatory protein DesR (desR) from Bacillus subtilis (strain 168).